We begin with the raw amino-acid sequence, 1865 residues long: Transcription initiation factor TFIID subunit 1 (1865 aa).

The tract at residues 1-27 (MLLPATGASRSAAIMSDTDSDEDSSGG) is disordered. In terms of domain architecture, Protein kinase 1 spans 1 to 409 (MLLPATGASR…VTQLHWEDDI (409 aa)). Ser-131 carries the post-translational modification Phosphoserine; by autocatalysis. The interval 144 to 199 (EDIDCKLMPPPPPPPGPVKKEKDQDGLTGEKVDFSSSSDSESEMGPQEAAQAESKD) is disordered. Over residues 151 to 160 (MPPPPPPPGP) the composition is skewed to pro residues. Basic and acidic residues predominate over residues 161–176 (VKKEKDQDGLTGEKVD). Residue Ser-302 is modified to Phosphoserine; by autocatalysis. The tract at residues 509–530 (PDEKEEATSNSPSKENKKESSL) is disordered. A histone acetyltransferase (HAT) region spans residues 512–971 (KEEATSNSPS…KIPNKPTQQK (460 aa)). N6-acetyllysine is present on Lys-539. Residues Lys-544 and Lys-557 each participate in a glycyl lysine isopeptide (Lys-Gly) (interchain with G-Cter in SUMO2) cross-link. Disordered regions lie at residues 964–983 (PNKP…KKTV) and 1228–1252 (RLKR…MKER). Composition is skewed to basic and acidic residues over residues 969 to 978 (QQKDDKEPQP) and 1228 to 1244 (RLKR…PPEK). Positions 1190-1268 (VRIRTTKDEE…CGACGAIGHM (79 aa)) form a DNA-binding region, HMG box. An interaction with ASF1A and ASF1B region spans residues 1337 to 1624 (VLKFPKQQLP…TAKEAALEEA (288 aa)). Positions 1346-1353 (PPKKKRRV) match the Nuclear localization signal motif. 2 Bromo domains span residues 1371–1479 (RRRT…LKEK) and 1493–1602 (LLDD…LTEY). One can recognise a Protein kinase 2 domain in the interval 1420-1865 (MDLQTLRENV…AGDSDMDSDE (446 aa)). The tract at residues 1625–1865 (ELESLDPMTP…AGDSDMDSDE (241 aa)) is disordered. A compositionally biased stretch (pro residues) spans 1633–1642 (TPGPYTPQPP). The segment covering 1646 to 1682 (DNSTSLSVSRDASVYQDESNMSVLDIPSATSEKQLTQ) has biased composition (polar residues). Phosphoserine occurs at positions 1664 and 1667. 2 stretches are compositionally biased toward acidic residues: residues 1683–1697 (EGED…EEEG) and 1715–1730 (EGED…EEGD). Over residues 1739–1751 (SESGSDSDVGSGS) the composition is skewed to low complexity. Phosphoserine is present on residues Ser-1773, Ser-1776, and Ser-1794. A compositionally biased stretch (polar residues) spans 1804 to 1814 (KSNTQDTSFSS). Over residues 1820-1829 (VSEEEEDEEE) the composition is skewed to acidic residues. Position 1821 is a phosphoserine (Ser-1821). Residues 1832–1841 (SGPSVLSQVH) show a composition bias toward polar residues.

Belongs to the TAF1 family. Component of the TFIID basal transcription factor complex, composed of TATA-box-binding protein TBP, and a number of TBP-associated factors (TAFs), including TAF1, TAF2, TAF3, TAF4, TAF5, TAF6, TAF7, TAF8, TAF9, TAF10, TAF11, TAF12 and TAF13. Interacts with TAF7; the interaction is direct. TAF1, when part of the TFIID complex, interacts with C-terminus of TP53. Part of a TFIID-containing RNA polymerase II pre-initiation complex that is composed of TBP and at least GTF2A1, GTF2A2, GTF2E1, GTF2E2, GTF2F1, GTF2H2, GTF2H3, GTF2H4, GTF2H5, GTF2B, TCEA1, ERCC2, ERCC3, TAF1, TAF2, TAF3, TAF4, TAF5, TAF6, TAF7, TAF8, TAF9, TAF10, TAF11, TAF12 and TAF13. Component of some MLL1/MLL complex, at least composed of the core components KMT2A/MLL1, ASH2L, HCFC1/HCF1, WDR5 and RBBP5, as well as the facultative components BACC1, CHD8, E2F6, HSP70, INO80C, KANSL1, LAS1L, MAX, MCRS1, MGA, KAT8/MOF, PELP1, PHF20, PRP31, RING2, RUVB1/TIP49A, RUVB2/TIP49B, SENP3, TAF1, TAF4, TAF6, TAF7, TAF9 and TEX10. RB1 interacts with the N-terminal domain of TAF1. Interacts with ASF1A and ASF1B. Interacts (via bromo domains) with acetylated lysine residues on the N-terminus of histone H1.4, H2A, H2B, H3 and H4 (in vitro). Requires Mg(2+) as cofactor. Phosphorylated by casein kinase II in vitro.

It is found in the nucleus. The catalysed reaction is L-seryl-[protein] + ATP = O-phospho-L-seryl-[protein] + ADP + H(+). The enzyme catalyses L-threonyl-[protein] + ATP = O-phospho-L-threonyl-[protein] + ADP + H(+). It catalyses the reaction L-lysyl-[protein] + acetyl-CoA = N(6)-acetyl-L-lysyl-[protein] + CoA + H(+). With respect to regulation, autophosphorylates on Ser residues. Inhibited by retinoblastoma tumor suppressor protein, RB1. Binding to TAF1 or CIITA inhibits the histone acetyltransferase activity. Functionally, the TFIID basal transcription factor complex plays a major role in the initiation of RNA polymerase II (Pol II)-dependent transcription. TFIID recognizes and binds promoters with or without a TATA box via its subunit TBP, a TATA-box-binding protein, and promotes assembly of the pre-initiation complex (PIC). The TFIID complex consists of TBP and TBP-associated factors (TAFs), including TAF1, TAF2, TAF3, TAF4, TAF5, TAF6, TAF7, TAF8, TAF9, TAF10, TAF11, TAF12 and TAF13. TAF1 is the largest component and core scaffold of the TFIID complex, involved in nucleating complex assembly. TAF1 forms a promoter DNA binding subcomplex of TFIID, together with TAF7 and TAF2. Contains novel N- and C-terminal Ser/Thr kinase domains which can autophosphorylate or transphosphorylate other transcription factors. Phosphorylates TP53 on 'Thr-55' which leads to MDM2-mediated degradation of TP53. Phosphorylates GTF2A1 and GTF2F1 on Ser residues. Possesses DNA-binding activity. Essential for progression of the G1 phase of the cell cycle. This is Transcription initiation factor TFIID subunit 1 from Mesocricetus auratus (Golden hamster).